The primary structure comprises 225 residues: UPF0173 metal-dependent hydrolase Pars_0810 (225 aa).

The protein belongs to the UPF0173 family.

In Pyrobaculum arsenaticum (strain DSM 13514 / JCM 11321 / PZ6), this protein is UPF0173 metal-dependent hydrolase Pars_0810.